The following is a 284-amino-acid chain: tRNA pseudouridine synthase A (284 aa).

The active-site Nucleophile is the Asp52. Position 149 (Tyr149) interacts with substrate.

The protein belongs to the tRNA pseudouridine synthase TruA family. Homodimer.

The enzyme catalyses uridine(38/39/40) in tRNA = pseudouridine(38/39/40) in tRNA. Its function is as follows. Formation of pseudouridine at positions 38, 39 and 40 in the anticodon stem and loop of transfer RNAs. The polypeptide is tRNA pseudouridine synthase A (Orientia tsutsugamushi (strain Boryong) (Rickettsia tsutsugamushi)).